Here is a 315-residue protein sequence, read N- to C-terminus: Tyrosine recombinase XerC (315 aa).

The region spanning 13-104 (ADLAAAREEW…GVRSLLRHLE (92 aa)) is the Core-binding (CB) domain. Residues 125-309 (SLPKPLTADD…DTQRLLEVYD (185 aa)) enclose the Tyr recombinase domain. Catalysis depends on residues arginine 168, lysine 193, histidine 261, arginine 264, and histidine 287. The active-site O-(3'-phospho-DNA)-tyrosine intermediate is the tyrosine 296.

Belongs to the 'phage' integrase family. XerC subfamily. Forms a cyclic heterotetrameric complex composed of two molecules of XerC and two molecules of XerD.

It localises to the cytoplasm. Its function is as follows. Site-specific tyrosine recombinase, which acts by catalyzing the cutting and rejoining of the recombining DNA molecules. The XerC-XerD complex is essential to convert dimers of the bacterial chromosome into monomers to permit their segregation at cell division. It also contributes to the segregational stability of plasmids. The sequence is that of Tyrosine recombinase XerC from Brucella melitensis biotype 1 (strain ATCC 23456 / CCUG 17765 / NCTC 10094 / 16M).